The chain runs to 170 residues: Protein-export protein SecB (170 aa).

Belongs to the SecB family. As to quaternary structure, homotetramer, a dimer of dimers. One homotetramer interacts with 1 SecA dimer.

It localises to the cytoplasm. One of the proteins required for the normal export of preproteins out of the cell cytoplasm. It is a molecular chaperone that binds to a subset of precursor proteins, maintaining them in a translocation-competent state. It also specifically binds to its receptor SecA. This is Protein-export protein SecB from Pasteurella multocida (strain Pm70).